The chain runs to 134 residues: uncharacterized protein (134 aa).

The 61-residue stretch at 10–70 folds into the HTH tetR-type domain; it reads KETRQRIIDA…AVLASRQHPL (61 aa). Positions 33–52 form a DNA-binding region, H-T-H motif; the sequence is TLDQIARKAGVTRGAVYWHF.

Functionally, unknown, does not seem to be involved in regulation of the ttgGHI or ttgVW operons. This is an uncharacterized protein from Pseudomonas putida (strain DOT-T1E).